Here is a 255-residue protein sequence, read N- to C-terminus: ATP synthase subunit b 1 (255 aa).

The chain crosses the membrane as a helical span at residues tryptophan 5–leucine 22.

This sequence belongs to the ATPase B chain family. F-type ATPases have 2 components, F(1) - the catalytic core - and F(0) - the membrane proton channel. F(1) has five subunits: alpha(3), beta(3), gamma(1), delta(1), epsilon(1). F(0) has three main subunits: a(1), b(2) and c(10-14). The alpha and beta chains form an alternating ring which encloses part of the gamma chain. F(1) is attached to F(0) by a central stalk formed by the gamma and epsilon chains, while a peripheral stalk is formed by the delta and b chains.

It localises to the cell inner membrane. In terms of biological role, f(1)F(0) ATP synthase produces ATP from ADP in the presence of a proton or sodium gradient. F-type ATPases consist of two structural domains, F(1) containing the extramembraneous catalytic core and F(0) containing the membrane proton channel, linked together by a central stalk and a peripheral stalk. During catalysis, ATP synthesis in the catalytic domain of F(1) is coupled via a rotary mechanism of the central stalk subunits to proton translocation. Component of the F(0) channel, it forms part of the peripheral stalk, linking F(1) to F(0). In Dinoroseobacter shibae (strain DSM 16493 / NCIMB 14021 / DFL 12), this protein is ATP synthase subunit b 1.